The chain runs to 419 residues: G protein-activated inward rectifier potassium channel 4 (419 aa).

The tract at residues 1 to 24 (MAGDSRNAMNQDMEIGVTPRDPKK) is disordered. Topologically, residues 1-86 (MAGDSRNAMN…LFTTLVDLKW (86 aa)) are cytoplasmic. Ser5 is subject to Phosphoserine. A helical membrane pass occupies residues 87-111 (RFNLLVFTMVYTITWLFFGFIWWLI). The Extracellular portion of the chain corresponds to 112-135 (AYIRGDLDHVGDREWIPCVENLSG). An intramembrane region (helical; Pore-forming) is located at residues 136–147 (FVSAFLFSIETE). The pore-forming intramembrane region spans 148–154 (TTIGYGF). Residues 149-154 (TIGYGF) carry the Selectivity filter motif. Topologically, residues 155 to 163 (RVITEKCPE) are extracellular. The chain crosses the membrane as a helical span at residues 164–185 (GIVLLLVQAILGSIVNAFMVGC). The Cytoplasmic portion of the chain corresponds to 186 to 419 (MFVKISQPKK…SGSQETKDSA (234 aa)). The segment at 381–419 (PSPPLPGGCVGAELGAEAEQEGEEEPEGLSGSQETKDSA) is disordered. The span at 396 to 407 (AEAEQEGEEEPE) shows a compositional bias: acidic residues.

Belongs to the inward rectifier-type potassium channel (TC 1.A.2.1) family. KCNJ5 subfamily. In terms of assembly, associates with KCNJ3/GIRK1 or KCNJ6/GIRK2 to form a G-protein-activated heteromultimer pore-forming unit. The resulting inward current is much larger.

It localises to the membrane. It carries out the reaction K(+)(in) = K(+)(out). Its activity is regulated as follows. Heteromultimer composed of KCNJ3/GIRK1 and KCNJ5/GIRK4 is activated by phosphatidylinositol 4,5 biphosphate (PtdIns(4,5)P2). Functionally, inward rectifier potassium channels are characterized by a greater tendency to allow potassium to flow into the cell rather than out of it. Their voltage dependence is regulated by the concentration of extracellular potassium; as external potassium is raised, the voltage range of the channel opening shifts to more positive voltages. The inward rectification is mainly due to the blockage of outward current by internal magnesium. This receptor plays a crucial role in regulating the heartbeat. Can be blocked by external barium. This potassium channel is controlled by G proteins. This Bos taurus (Bovine) protein is G protein-activated inward rectifier potassium channel 4 (KCNJ5).